A 200-amino-acid polypeptide reads, in one-letter code: NADH-quinone oxidoreductase subunit C (200 aa).

The protein belongs to the complex I 30 kDa subunit family. In terms of assembly, NDH-1 is composed of 14 different subunits. Subunits NuoB, C, D, E, F, and G constitute the peripheral sector of the complex.

The protein resides in the cell inner membrane. It carries out the reaction a quinone + NADH + 5 H(+)(in) = a quinol + NAD(+) + 4 H(+)(out). In terms of biological role, NDH-1 shuttles electrons from NADH, via FMN and iron-sulfur (Fe-S) centers, to quinones in the respiratory chain. The immediate electron acceptor for the enzyme in this species is believed to be ubiquinone. Couples the redox reaction to proton translocation (for every two electrons transferred, four hydrogen ions are translocated across the cytoplasmic membrane), and thus conserves the redox energy in a proton gradient. In Rhizobium johnstonii (strain DSM 114642 / LMG 32736 / 3841) (Rhizobium leguminosarum bv. viciae), this protein is NADH-quinone oxidoreductase subunit C.